A 186-amino-acid polypeptide reads, in one-letter code: Casparian strip membrane protein 6 (186 aa).

Over 1-23 (MKAGPIELGEGKSSAPKAAVNRG) the chain is Cytoplasmic. The helical transmembrane segment at 24-44 (VAILDFILRILAFIGTLGSAI) threads the bilayer. Topologically, residues 45–73 (SMATTNETLPFFTQFIRFRAEYDDLPTFT) are extracellular. Asn-50 is a glycosylation site (N-linked (GlcNAc...) asparagine). Residues 74–94 (FFVVANGVVSAYLLFSLPFSI) traverse the membrane as a helical segment. Residues 95-106 (FNIVRSKAQNSR) are Cytoplasmic-facing. The chain crosses the membrane as a helical span at residues 107–127 (ILLIILDTAMLGLLSAGASAA). At 128-160 (AAIVYLAHQGNVRTNWSAICQQFNSFCERISGS) the chain is on the extracellular side. Residue Asn-142 is glycosylated (N-linked (GlcNAc...) asparagine). A helical transmembrane segment spans residues 161 to 181 (LIGSFIGVVVFILLISLSAVA). The Cytoplasmic portion of the chain corresponds to 182–186 (LSRHK).

This sequence belongs to the Casparian strip membrane proteins (CASP) family. Homodimer and heterodimers.

The protein localises to the cell membrane. Functionally, regulates membrane-cell wall junctions and localized cell wall deposition. Required for establishment of the Casparian strip membrane domain (CSD) and the subsequent formation of Casparian strips, a cell wall modification of the root endodermis that determines an apoplastic barrier between the intraorganismal apoplasm and the extraorganismal apoplasm and prevents lateral diffusion. This chain is Casparian strip membrane protein 6, found in Populus trichocarpa (Western balsam poplar).